Here is a 329-residue protein sequence, read N- to C-terminus: Glycerol-3-phosphate dehydrogenase [NAD(P)+] (329 aa).

The NADPH site is built by S13, W14, H34, and K105. Sn-glycerol 3-phosphate-binding residues include K105, G134, and S136. Position 138 (A138) interacts with NADPH. 5 residues coordinate sn-glycerol 3-phosphate: K189, D242, S252, R253, and N254. K189 acts as the Proton acceptor in catalysis. R253 is a binding site for NADPH. NADPH is bound by residues V277 and E279.

It belongs to the NAD-dependent glycerol-3-phosphate dehydrogenase family.

The protein localises to the cytoplasm. It catalyses the reaction sn-glycerol 3-phosphate + NAD(+) = dihydroxyacetone phosphate + NADH + H(+). The enzyme catalyses sn-glycerol 3-phosphate + NADP(+) = dihydroxyacetone phosphate + NADPH + H(+). The protein operates within membrane lipid metabolism; glycerophospholipid metabolism. Catalyzes the reduction of the glycolytic intermediate dihydroxyacetone phosphate (DHAP) to sn-glycerol 3-phosphate (G3P), the key precursor for phospholipid synthesis. The chain is Glycerol-3-phosphate dehydrogenase [NAD(P)+] from Legionella pneumophila (strain Paris).